The following is a 206-amino-acid chain: Small ribosomal subunit protein uS4 (206 aa).

Positions 94–157 (RRLDNVVYRL…RRRTYFKNLI (64 aa)) constitute an S4 RNA-binding domain.

Belongs to the universal ribosomal protein uS4 family. As to quaternary structure, part of the 30S ribosomal subunit. Contacts protein S5. The interaction surface between S4 and S5 is involved in control of translational fidelity.

In terms of biological role, one of the primary rRNA binding proteins, it binds directly to 16S rRNA where it nucleates assembly of the body of the 30S subunit. With S5 and S12 plays an important role in translational accuracy. In Roseiflexus sp. (strain RS-1), this protein is Small ribosomal subunit protein uS4.